Consider the following 179-residue polypeptide: ATP synthase subunit delta (179 aa).

The protein belongs to the ATPase delta chain family. As to quaternary structure, F-type ATPases have 2 components, F(1) - the catalytic core - and F(0) - the membrane proton channel. F(1) has five subunits: alpha(3), beta(3), gamma(1), delta(1), epsilon(1). F(0) has three main subunits: a(1), b(2) and c(10-14). The alpha and beta chains form an alternating ring which encloses part of the gamma chain. F(1) is attached to F(0) by a central stalk formed by the gamma and epsilon chains, while a peripheral stalk is formed by the delta and b chains.

It localises to the cell inner membrane. In terms of biological role, f(1)F(0) ATP synthase produces ATP from ADP in the presence of a proton or sodium gradient. F-type ATPases consist of two structural domains, F(1) containing the extramembraneous catalytic core and F(0) containing the membrane proton channel, linked together by a central stalk and a peripheral stalk. During catalysis, ATP synthesis in the catalytic domain of F(1) is coupled via a rotary mechanism of the central stalk subunits to proton translocation. This protein is part of the stalk that links CF(0) to CF(1). It either transmits conformational changes from CF(0) to CF(1) or is implicated in proton conduction. The sequence is that of ATP synthase subunit delta from Acidobacterium capsulatum (strain ATCC 51196 / DSM 11244 / BCRC 80197 / JCM 7670 / NBRC 15755 / NCIMB 13165 / 161).